Here is a 131-residue protein sequence, read N- to C-terminus: Profilin LP04 (131 aa).

Belongs to the profilin family. As to quaternary structure, occurs in many kinds of cells as a complex with monomeric actin in a 1:1 ratio.

The protein localises to the cytoplasm. It is found in the cytoskeleton. Binds to actin and affects the structure of the cytoskeleton. At high concentrations, profilin prevents the polymerization of actin, whereas it enhances it at low concentrations. By binding to PIP2, it inhibits the formation of IP3 and DG. This Oryza sativa subsp. indica (Rice) protein is Profilin LP04.